The following is a 288-amino-acid chain: 2-hydroxy-6-oxononadienedioate/2-hydroxy-6-oxononatrienedioate hydrolase (288 aa).

Histidine 267 functions as the Proton acceptor in the catalytic mechanism.

The protein belongs to the AB hydrolase superfamily. MhpC family. In terms of assembly, homodimer.

It catalyses the reaction (2Z,4E)-2-hydroxy-6-oxonona-2,4-dienedioate + H2O = (2Z)-2-hydroxypenta-2,4-dienoate + succinate + H(+). It carries out the reaction (2Z,4E,7E)-2-hydroxy-6-oxonona-2,4,7-trienedioate + H2O = (2Z)-2-hydroxypenta-2,4-dienoate + fumarate + H(+). It participates in aromatic compound metabolism; 3-phenylpropanoate degradation. In terms of biological role, catalyzes the cleavage of the C5-C6 bond of 2-hydroxy-6-oxononadienedioate and 2-hydroxy-6-oxononatrienedioate, a dienol ring fission product of the bacterial meta-cleavage pathway for degradation of phenylpropionic acid. In Escherichia coli O81 (strain ED1a), this protein is 2-hydroxy-6-oxononadienedioate/2-hydroxy-6-oxononatrienedioate hydrolase.